The primary structure comprises 219 residues: Predicted GPI-anchored protein 6 (219 aa).

A signal peptide spans 1 to 19; the sequence is MQFQTLLVVAGSLVASTLA. 3 N-linked (GlcNAc...) asparagine glycosylation sites follow: N21, N173, and N188. G194 is lipidated: GPI-anchor amidated glycine. A propeptide spans 195–219 (removed in mature form); sequence GAVGGASNQITVGFAAIAGLAAILL.

This sequence belongs to the flocculin family. In terms of processing, the GPI-anchor is attached to the protein in the endoplasmic reticulum and serves to target the protein to the cell surface. There, the glucosamine-inositol phospholipid moiety is cleaved off and the GPI-modified mannoprotein is covalently attached via its lipidless GPI glycan remnant to the 1,6-beta-glucan of the outer cell wall layer.

It localises to the secreted. The protein resides in the cell wall. Its subcellular location is the membrane. Its function is as follows. Probable cell wall protein that participates directly in adhesive cell-cell interactions. The sequence is that of Predicted GPI-anchored protein 6 (PGA6) from Candida albicans (strain SC5314 / ATCC MYA-2876) (Yeast).